We begin with the raw amino-acid sequence, 721 residues long: Catalase-peroxidase 1 (721 aa).

Positions 98 to 223 (WHAAGSYRVA…LAAVQMGLIY (126 aa)) form a cross-link, tryptophyl-tyrosyl-methioninium (Trp-Tyr) (with M-249). The active-site Proton acceptor is the His99. The segment at residues 223-249 (YVNPEGVNGQPDPLRTAQDVRVTFGRM) is a cross-link (tryptophyl-tyrosyl-methioninium (Tyr-Met) (with W-98)). His264 is a binding site for heme b.

It belongs to the peroxidase family. Peroxidase/catalase subfamily. Homodimer or homotetramer. Heme b is required as a cofactor. Formation of the three residue Trp-Tyr-Met cross-link is important for the catalase, but not the peroxidase activity of the enzyme.

The catalysed reaction is H2O2 + AH2 = A + 2 H2O. The enzyme catalyses 2 H2O2 = O2 + 2 H2O. In terms of biological role, bifunctional enzyme with both catalase and broad-spectrum peroxidase activity. The polypeptide is Catalase-peroxidase 1 (Legionella pneumophila (strain Corby)).